The chain runs to 146 residues: Large ribosomal subunit protein bL21 (146 aa).

The segment at 96–146 (KKKTRRKMGHRQELTRVMVKSISITNSTPKTSSKTEVKKKSTSPKASNPEN) is disordered.

The protein belongs to the bacterial ribosomal protein bL21 family. Part of the 50S ribosomal subunit. Contacts protein L20.

In terms of biological role, this protein binds to 23S rRNA in the presence of protein L20. This is Large ribosomal subunit protein bL21 from Prochlorococcus marinus subsp. pastoris (strain CCMP1986 / NIES-2087 / MED4).